Consider the following 493-residue polypeptide: 3-octaprenyl-4-hydroxybenzoate carboxy-lyase (493 aa).

Mn(2+) is bound at residue Asn172. Residues 175 to 177 (IYR), 189 to 191 (RWL), and 194 to 195 (RG) each bind prenylated FMN. Residue Glu238 participates in Mn(2+) binding. The active-site Proton donor is the Asp287.

Belongs to the UbiD family. As to quaternary structure, homohexamer. The cofactor is prenylated FMN. Requires Mn(2+) as cofactor.

Its subcellular location is the cell membrane. The enzyme catalyses a 4-hydroxy-3-(all-trans-polyprenyl)benzoate + H(+) = a 2-(all-trans-polyprenyl)phenol + CO2. It participates in cofactor biosynthesis; ubiquinone biosynthesis. Functionally, catalyzes the decarboxylation of 3-octaprenyl-4-hydroxy benzoate to 2-octaprenylphenol, an intermediate step in ubiquinone biosynthesis. The protein is 3-octaprenyl-4-hydroxybenzoate carboxy-lyase of Shewanella putrefaciens (strain CN-32 / ATCC BAA-453).